The sequence spans 1812 residues: Sperm flagellar protein 2 (1812 aa).

In terms of domain architecture, Calponin-homology (CH) spans 1-105; that stretch reads MSEILCHWLN…LLYQLYIALQ (105 aa). Coiled coils occupy residues 178 to 260 and 374 to 403; these read LENF…KDLQ and EERR…EEQA. Positions 618 to 630 are enriched in basic and acidic residues; sequence EEKASPVRQESGD. Residues 618-658 form a disordered region; that stretch reads EEKASPVRQESGDRSQNLHNVLSAEGTPETEDETRLSTKKT. Coiled-coil stretches lie at residues 724 to 750, 803 to 827, and 868 to 897; these read LNQA…KKSQ, ENIN…DQIQ, and KEMF…KEEF. Basic and acidic residues predominate over residues 879-897; that stretch reads ENKAKKKSEEKEAEKKEEF. Disordered stretches follow at residues 879–1002, 1272–1322, and 1793–1812; these read ENKA…KPGS, EEKE…APVI, and EHIQ…EEKK. The span at 902–913 shows a compositional bias: pro residues; it reads ATPPTPPAPPPS. Composition is skewed to basic and acidic residues over residues 914-929, 943-961, and 1272-1285; these read EPEK…ERSK, HGNR…ETSP, and EEKE…KEKP. The segment covering 1292–1310 has biased composition (basic residues); that stretch reads KKVKKEPPKKKREDKKGKG. Residues 1317–1669 form an interaction with IFT20 region; it reads ESAPVITVEE…AEKTSSFIDM (353 aa).

In terms of assembly, interacts (via C-terminus) with IFT20. Interacts with DYNC1I2. As to expression, predominantly expressed in ciliated tissues. Mainly expressed in testis, followed by trachea. Also expressed at lower level in lung, kidney and liver.

It is found in the cell projection. The protein localises to the cilium. It localises to the flagellum. Its subcellular location is the cytoplasm. The protein resides in the golgi apparatus. Its function is as follows. Required for correct axoneme development in spermatozoa. Important for normal development of the manchette and sperm head morphology. Essential for male fertility. Plays a role in localization of the intraflagellar transport protein IFT20 to the manchette, suggesting function as an adapter for dynein-mediated protein transport during spermatogenesis. Also plays a role in bone growth where it seems to be required for normal osteoblast differentiation. This is Sperm flagellar protein 2 (SPEF2) from Sus scrofa (Pig).